A 291-amino-acid chain; its full sequence is ATP synthase gamma chain (291 aa).

The protein belongs to the ATPase gamma chain family. F-type ATPases have 2 components, CF(1) - the catalytic core - and CF(0) - the membrane proton channel. CF(1) has five subunits: alpha(3), beta(3), gamma(1), delta(1), epsilon(1). CF(0) has three main subunits: a, b and c.

The protein resides in the cell membrane. In terms of biological role, produces ATP from ADP in the presence of a proton gradient across the membrane. The gamma chain is believed to be important in regulating ATPase activity and the flow of protons through the CF(0) complex. The sequence is that of ATP synthase gamma chain from Buchnera aphidicola subsp. Baizongia pistaciae (strain Bp).